Here is a 130-residue protein sequence, read N- to C-terminus: Ribonuclease P protein component 2 (130 aa).

It belongs to the eukaryotic/archaeal RNase P protein component 2 family. In terms of assembly, consists of a catalytic RNA component and at least 4-5 protein subunits.

The protein resides in the cytoplasm. The catalysed reaction is Endonucleolytic cleavage of RNA, removing 5'-extranucleotides from tRNA precursor.. In terms of biological role, part of ribonuclease P, a protein complex that generates mature tRNA molecules by cleaving their 5'-ends. The protein is Ribonuclease P protein component 2 of Methanococcus vannielii (strain ATCC 35089 / DSM 1224 / JCM 13029 / OCM 148 / SB).